The sequence spans 202 residues: Adenylyl-sulfate kinase (202 aa).

Glycine 31–serine 38 is a binding site for ATP. Serine 105 serves as the catalytic Phosphoserine intermediate.

It belongs to the APS kinase family.

The enzyme catalyses adenosine 5'-phosphosulfate + ATP = 3'-phosphoadenylyl sulfate + ADP + H(+). Its pathway is sulfur metabolism; hydrogen sulfide biosynthesis; sulfite from sulfate: step 2/3. Catalyzes the synthesis of activated sulfate. This is Adenylyl-sulfate kinase (MET14) from Saccharomyces cerevisiae (strain ATCC 204508 / S288c) (Baker's yeast).